Reading from the N-terminus, the 151-residue chain is Ribosome maturation factor RimP (151 aa).

Belongs to the RimP family.

Its subcellular location is the cytoplasm. Its function is as follows. Required for maturation of 30S ribosomal subunits. In Vibrio campbellii (strain ATCC BAA-1116), this protein is Ribosome maturation factor RimP.